The chain runs to 381 residues: Alkanesulfonate monooxygenase (381 aa).

It belongs to the SsuD family. As to quaternary structure, homotetramer.

It catalyses the reaction an alkanesulfonate + FMNH2 + O2 = an aldehyde + FMN + sulfite + H2O + 2 H(+). Functionally, catalyzes the desulfonation of aliphatic sulfonates. This Cronobacter sakazakii (strain ATCC BAA-894) (Enterobacter sakazakii) protein is Alkanesulfonate monooxygenase.